We begin with the raw amino-acid sequence, 635 residues long: Extracellular metalloproteinase MEP (635 aa).

The signal sequence occupies residues 1 to 19 (MRAFLLASLASLPAVNVYA). A propeptide spanning residues 20–244 (HPTHNSRGLT…VHAVVDYAAE (225 aa)) is cleaved from the precursor. 3 N-linked (GlcNAc...) asparagine glycosylation sites follow: asparagine 287, asparagine 302, and asparagine 336. Residue histidine 429 coordinates Zn(2+). Glutamate 430 is an active-site residue. Residue histidine 433 participates in Zn(2+) binding.

It belongs to the peptidase M36 family. Requires Zn(2+) as cofactor.

It is found in the secreted. Secreted metalloproteinase that allows assimilation of proteinaceous substrates. In Leptosphaeria maculans (strain JN3 / isolate v23.1.3 / race Av1-4-5-6-7-8) (Blackleg fungus), this protein is Extracellular metalloproteinase MEP (MEP).